Consider the following 681-residue polypeptide: DNA-directed RNA polymerase subunit beta' (681 aa).

Positions 69, 71, 87, and 90 each coordinate Zn(2+). Mg(2+)-binding residues include Asp-490, Asp-492, and Asp-494.

Belongs to the RNA polymerase beta' chain family. RpoC1 subfamily. As to quaternary structure, in plastids the minimal PEP RNA polymerase catalytic core is composed of four subunits: alpha, beta, beta', and beta''. When a (nuclear-encoded) sigma factor is associated with the core the holoenzyme is formed, which can initiate transcription. Mg(2+) serves as cofactor. The cofactor is Zn(2+).

The protein resides in the plastid. It localises to the chloroplast. It carries out the reaction RNA(n) + a ribonucleoside 5'-triphosphate = RNA(n+1) + diphosphate. In terms of biological role, DNA-dependent RNA polymerase catalyzes the transcription of DNA into RNA using the four ribonucleoside triphosphates as substrates. In Liriodendron tulipifera (Tuliptree), this protein is DNA-directed RNA polymerase subunit beta'.